We begin with the raw amino-acid sequence, 331 residues long: NAD-dependent protein deacetylase HST2 (331 aa).

The 262-residue stretch at M1–D262 folds into the Deacetylase sirtuin-type domain. NAD(+) is bound by residues G26–Y46 and Q109–D112. The active-site Proton acceptor is the H129. Residues C137, C140, C161, and C164 each contribute to the Zn(2+) site. NAD(+) contacts are provided by residues G201–S203, N226–E228, and C248. Residues Y276–I331 adopt a coiled-coil conformation. The segment at E283–D319 is disordered.

Belongs to the sirtuin family. Class I subfamily. The cofactor is Zn(2+).

It is found in the cytoplasm. Its subcellular location is the nucleus. The catalysed reaction is N(6)-acetyl-L-lysyl-[protein] + NAD(+) + H2O = 2''-O-acetyl-ADP-D-ribose + nicotinamide + L-lysyl-[protein]. Functionally, NAD-dependent histone deacetylase that is involved in nuclear silencing events. Derepresses subtelomeric silencing and increases repression in nucleolar (rDNA) silencing. Its function is negatively regulated by active nuclear export. In Candida albicans (strain SC5314 / ATCC MYA-2876) (Yeast), this protein is NAD-dependent protein deacetylase HST2 (HST2).